The primary structure comprises 1010 residues: MEGAAPPASSGSEVTGAGSGKVDAGGGAAMEERFADLCKSKLGLDESITRQAMQLFKESKSILLSSMSSLGSGSPEEIERFWSAFVLYCVSRLGKAGKGKEDGGISLCQILRAFSLNIVDFFKEMPQFCIKVGSVLAGLYGSDWEKRLELKELQANVVHLSLLSRYYKRAYQELFLLNDAKPPENSAEPNAQASDYYRFGWLLFLVLRIQTFSRFKDLVTSTNGLVSVLAVLIVHIPVRLRNFNIKESSSFAKKSDKGVNLIASLCEKYHTSEDELSKAIEKTNTLIVDILKKKPCPAASECQQDRLSFIDPEGLTYFKNLLEEDSLKLSLLMLEKEYENAINTKGELDERMFANDEDSLLGSGSLSGGAINLPGTKRKYDVMASPAKSITSPSPMSPPRFCASPTGNGYCSSKMAPITPVSTAMTTAKWLRSTISPLPSKPSGELLRFFSACDKDVTDDITRRAGIILGAIFTSSSFGERICTSVRSTNRIDAIWTEQRKMEALKLYYRVLESMCRAETQILSGNNLTSLLSNERFHRCMIACSAELVLATHKTVTMMFPAVLEKTGITAFDLSKVIESFVRHEDTLPRELKRHLNSLEERLLESMAWEKGSSMYNSLIVARPTLSAEINRLGLLAEPMPSLDAIAAHHNISLEGLPPLPFQKQEHSPDKDEVRSPKRACTERRNVLVDNNSFRSPVKDTLKSKLPPLQSAFLSPTRPNPAAGGELCAETGIGVFLSKIAKLAAIRIRGLCERLQLSQQVLERVYSLVQQIIIQQTALFFNRHIDQIILCSIYGVAKISQLALTFKEIIFGYRKQSQCKPQVFRSVYVHWASRSRNGKTGEDHVDIITFYNEVFIPTVKPLLVELGSGTSPNKKNEEKCAADGPYPESPRLSRFPNLPDMSPKKVSAAHNVYVSPLRTSKMDTLLSPSSKSYYACVGESTHAFQSPSKDLKVINNRLNSGKKVSGRLNFDVVSDLVVARSLSDQNSASAAATTADITTKTPVKLEQPDC.

Residues 1-23 (MEGAAPPASSGSEVTGAGSGKVD) are disordered. Residues 419 to 619 (TPVSTAMTTA…EKGSSMYNSL (201 aa)) form a domain A region. The pocket stretch occupies residues 419-861 (TPVSTAMTTA…NEVFIPTVKP (443 aa)). The spacer stretch occupies residues 620 to 730 (IVARPTLSAE…PAAGGELCAE (111 aa)). Residues 657–679 (LPPLPFQKQEHSPDKDEVRSPKR) are disordered. Residues 664 to 679 (KQEHSPDKDEVRSPKR) show a composition bias toward basic and acidic residues. The interval 731–861 (TGIGVFLSKI…NEVFIPTVKP (131 aa)) is domain B. A disordered region spans residues 868-898 (SGTSPNKKNEEKCAADGPYPESPRLSRFPNL).

The protein belongs to the retinoblastoma protein (RB) family.

It localises to the nucleus. Functionally, regulator of biological processes that recruits a histone deacetylase to control gene transcription. May play a role in the entry into mitosis, negatively regulating the cell proliferation. Formation of stable complexes with geminiviridae replication-associated proteins may create a cellular environment which favors viral DNA replication. This Oryza sativa subsp. indica (Rice) protein is Retinoblastoma-related protein 1 (RBR1).